We begin with the raw amino-acid sequence, 490 residues long: C-type lectin domain family 14 member A (490 aa).

The N-terminal stretch at 1-21 (MRPAFALCLLWQALWPGPGGG) is a signal peptide. Over 22-397 (EHPTADRAGC…TPQAFDSSSA (376 aa)) the chain is Extracellular. Residues 33 to 173 (ASGACYSLHH…LRANGYLCKY (141 aa)) enclose the C-type lectin domain. C143 and C162 are joined by a disulfide. An N-linked (GlcNAc...) asparagine glycan is attached at N189. The EGF-like domain occupies 245 to 287 (PCPGRYLRAGKCAELPNCLDDLGGFACECATGFELGKDGRSCV). Positions 286–349 (CVTSGEGQPT…VTSIPEIPRW (64 aa)) are disordered. A compositionally biased stretch (low complexity) spans 301–315 (VPTRRPPATATSPVP). N381 carries an N-linked (GlcNAc...) asparagine glycan. A helical transmembrane segment spans residues 398–418 (VVFIFVSTAVVVLVILTMTVL). The Cytoplasmic segment spans residues 419-490 (GLVKLCFHES…AESPLGSSDA (72 aa)). Residues 428 to 461 (SPSSQPRKESMGPPGLESDPEPAALGSSSAHCTN) form a disordered region.

The protein localises to the membrane. In Homo sapiens (Human), this protein is C-type lectin domain family 14 member A (CLEC14A).